The following is a 360-amino-acid chain: Type 2 DNA topoisomerase 6 subunit A (360 aa).

In terms of domain architecture, Topo IIA-type catalytic spans 3 to 140 (EIERRCLRAL…FHIRPEEDGA (138 aa)). Residue tyrosine 97 is the O-(5'-phospho-DNA)-tyrosine intermediate of the active site. 2 residues coordinate Mg(2+): glutamate 193 and aspartate 245.

It belongs to the TOP6A family. Homodimer. Heterotetramer of two Top6A and two Top6B chains. It depends on Mg(2+) as a cofactor.

The catalysed reaction is ATP-dependent breakage, passage and rejoining of double-stranded DNA.. Relaxes both positive and negative superturns and exhibits a strong decatenase activity. This is Type 2 DNA topoisomerase 6 subunit A from Archaeoglobus fulgidus (strain ATCC 49558 / DSM 4304 / JCM 9628 / NBRC 100126 / VC-16).